A 435-amino-acid chain; its full sequence is ATP-dependent protease ATPase subunit HslU (435 aa).

Residues Ile-18, 60–65, Asp-248, Glu-313, and Arg-385 each bind ATP; that span reads GVGKTE.

This sequence belongs to the ClpX chaperone family. HslU subfamily. As to quaternary structure, a double ring-shaped homohexamer of HslV is capped on each side by a ring-shaped HslU homohexamer. The assembly of the HslU/HslV complex is dependent on binding of ATP.

The protein resides in the cytoplasm. In terms of biological role, ATPase subunit of a proteasome-like degradation complex; this subunit has chaperone activity. The binding of ATP and its subsequent hydrolysis by HslU are essential for unfolding of protein substrates subsequently hydrolyzed by HslV. HslU recognizes the N-terminal part of its protein substrates and unfolds these before they are guided to HslV for hydrolysis. The chain is ATP-dependent protease ATPase subunit HslU from Allorhizobium ampelinum (strain ATCC BAA-846 / DSM 112012 / S4) (Agrobacterium vitis (strain S4)).